The following is a 482-amino-acid chain: Long chain base biosynthesis protein 1 (482 aa).

A helical membrane pass occupies residues 32–52 (VPIRGHFFVEGLLGVVIIILL).

The protein belongs to the class-II pyridoxal-phosphate-dependent aminotransferase family. As to quaternary structure, heterodimer with LCB2 (LCB2a or LCB2b). Component of the serine palmitoyltransferase (SPT) complex, composed of LCB1 and LCB2 (LCB2a or LCB2b). Requires pyridoxal 5'-phosphate as cofactor. As to expression, ubiquitous.

Its subcellular location is the endoplasmic reticulum membrane. The catalysed reaction is L-serine + hexadecanoyl-CoA + H(+) = 3-oxosphinganine + CO2 + CoA. It functions in the pathway lipid metabolism; sphingolipid metabolism. In terms of biological role, component of serine palmitoyltransferase (SPT), which catalyzes the committed step in the synthesis of sphingolipids, the condensation of serine with palmitoyl CoA to form the long chain base 3-ketosphinganine. The heterodimer formed with LCB2 constitutes the catalytic core. Involved in the regulation of the programmed cell death (PCD) signaling pathway. Plays an important role during male gametogenesis and embryogenesis. This is Long chain base biosynthesis protein 1 (LCB1) from Arabidopsis thaliana (Mouse-ear cress).